Consider the following 181-residue polypeptide: Mytilin-1 (181 aa).

The N-terminal stretch at 1–22 (MISKYCLFVIVLGTTGTALVLT) is a signal peptide.

Component of the organic matrix of calcified shell layers like nacre and prisms.

The protein localises to the secreted. The protein is Mytilin-1 of Mytilus galloprovincialis (Mediterranean mussel).